The sequence spans 212 residues: FMN-dependent NADH:quinone oxidoreductase (212 aa).

Residues S9, S15–S17, and T138–G141 each bind FMN.

Belongs to the azoreductase type 1 family. In terms of assembly, homodimer. It depends on FMN as a cofactor.

The enzyme catalyses 2 a quinone + NADH + H(+) = 2 a 1,4-benzosemiquinone + NAD(+). The catalysed reaction is N,N-dimethyl-1,4-phenylenediamine + anthranilate + 2 NAD(+) = 2-(4-dimethylaminophenyl)diazenylbenzoate + 2 NADH + 2 H(+). Functionally, quinone reductase that provides resistance to thiol-specific stress caused by electrophilic quinones. Also exhibits azoreductase activity. Catalyzes the reductive cleavage of the azo bond in aromatic azo compounds to the corresponding amines. The polypeptide is FMN-dependent NADH:quinone oxidoreductase (Delftia acidovorans (strain DSM 14801 / SPH-1)).